We begin with the raw amino-acid sequence, 217 residues long: MTAIRVPRRRASADLQGGFDFSRPDEIVCGVDEAGRGPLAGPVVAAAVILDPARPIDGLDDSKALSAKKRDALYDLIVARASAFCVASASVDEIDTLNILHATMLAMKRAVEGLSVLPTLAQIDGNRCPTLTVRAEAIVSGDALVPSISAASILAKVTRDRMLVDLHERFPVYGFNMHVGYSTPQHLAALREHGPCEVHRRSFAPVREALDLMAGSR.

The RNase H type-2 domain occupies 26–215 (EIVCGVDEAG…VREALDLMAG (190 aa)). A divalent metal cation-binding residues include Asp32, Glu33, and Asp124.

Belongs to the RNase HII family. The cofactor is Mn(2+). Mg(2+) is required as a cofactor.

The protein localises to the cytoplasm. The catalysed reaction is Endonucleolytic cleavage to 5'-phosphomonoester.. In terms of biological role, endonuclease that specifically degrades the RNA of RNA-DNA hybrids. The polypeptide is Ribonuclease HII (Burkholderia ambifaria (strain ATCC BAA-244 / DSM 16087 / CCUG 44356 / LMG 19182 / AMMD) (Burkholderia cepacia (strain AMMD))).